The chain runs to 660 residues: Acetyl-coenzyme A synthetase (660 aa).

CoA contacts are provided by residues 197 to 200 (RGGK) and Thr317. ATP is bound by residues 397 to 399 (GEP), 421 to 426 (DTFWQT), Asp512, and Arg528. Ser536 contacts CoA. Arg539 is a binding site for ATP. Residues Val550 and Val555 each contribute to the Mg(2+) site. Residue Lys625 is modified to N6-acetyllysine.

Belongs to the ATP-dependent AMP-binding enzyme family. Requires Mg(2+) as cofactor. Acetylated. Deacetylation by the SIR2-homolog deacetylase activates the enzyme.

The catalysed reaction is acetate + ATP + CoA = acetyl-CoA + AMP + diphosphate. In terms of biological role, catalyzes the conversion of acetate into acetyl-CoA (AcCoA), an essential intermediate at the junction of anabolic and catabolic pathways. AcsA undergoes a two-step reaction. In the first half reaction, AcsA combines acetate with ATP to form acetyl-adenylate (AcAMP) intermediate. In the second half reaction, it can then transfer the acetyl group from AcAMP to the sulfhydryl group of CoA, forming the product AcCoA. The protein is Acetyl-coenzyme A synthetase of Cupriavidus metallidurans (strain ATCC 43123 / DSM 2839 / NBRC 102507 / CH34) (Ralstonia metallidurans).